Reading from the N-terminus, the 374-residue chain is Trehalose-phosphate phosphatase B (374 aa).

This sequence belongs to the trehalose phosphatase family. It depends on a divalent metal cation as a cofactor. As to expression, expressed in flowers.

The catalysed reaction is alpha,alpha-trehalose 6-phosphate + H2O = alpha,alpha-trehalose + phosphate. It functions in the pathway glycan biosynthesis; trehalose biosynthesis. In terms of biological role, removes the phosphate from trehalose 6-phosphate to produce free trehalose. Trehalose accumulation in plant may improve abiotic stress tolerance. This Arabidopsis thaliana (Mouse-ear cress) protein is Trehalose-phosphate phosphatase B (TPPB).